Here is a 155-residue protein sequence, read N- to C-terminus: SsrA-binding protein (155 aa).

This sequence belongs to the SmpB family.

It localises to the cytoplasm. In terms of biological role, required for rescue of stalled ribosomes mediated by trans-translation. Binds to transfer-messenger RNA (tmRNA), required for stable association of tmRNA with ribosomes. tmRNA and SmpB together mimic tRNA shape, replacing the anticodon stem-loop with SmpB. tmRNA is encoded by the ssrA gene; the 2 termini fold to resemble tRNA(Ala) and it encodes a 'tag peptide', a short internal open reading frame. During trans-translation Ala-aminoacylated tmRNA acts like a tRNA, entering the A-site of stalled ribosomes, displacing the stalled mRNA. The ribosome then switches to translate the ORF on the tmRNA; the nascent peptide is terminated with the 'tag peptide' encoded by the tmRNA and targeted for degradation. The ribosome is freed to recommence translation, which seems to be the essential function of trans-translation. In Streptococcus pneumoniae serotype 4 (strain ATCC BAA-334 / TIGR4), this protein is SsrA-binding protein.